We begin with the raw amino-acid sequence, 155 residues long: Small ribosomal subunit protein uS7cz/uS7cy (155 aa).

This sequence belongs to the universal ribosomal protein uS7 family. In terms of assembly, part of the 30S ribosomal subunit.

It is found in the plastid. The protein localises to the chloroplast. Its function is as follows. One of the primary rRNA binding proteins, it binds directly to 16S rRNA where it nucleates assembly of the head domain of the 30S subunit. In Drimys granadensis, this protein is Small ribosomal subunit protein uS7cz/uS7cy (rps7-A).